A 304-amino-acid polypeptide reads, in one-letter code: Homoserine kinase (304 aa).

91 to 101 (PLGKGMGSSAA) is an ATP binding site.

This sequence belongs to the GHMP kinase family. Homoserine kinase subfamily.

It localises to the cytoplasm. It carries out the reaction L-homoserine + ATP = O-phospho-L-homoserine + ADP + H(+). Its pathway is amino-acid biosynthesis; L-threonine biosynthesis; L-threonine from L-aspartate: step 4/5. Catalyzes the ATP-dependent phosphorylation of L-homoserine to L-homoserine phosphate. This chain is Homoserine kinase, found in Solibacter usitatus (strain Ellin6076).